The primary structure comprises 370 residues: MTATSSHGARLTIDLGALAANWRRLAAEAAGAECAAVIKADAYGCGIAQVAPALWDAGCRTFFVAHLSEAERTRAVLSDATIYVLNGFPPGSAPAYRAMGFRPVLGSRSEIAEWAQACRSLGERLPAALHVDTGMNRLGLNPAEAIDLAGDAVLGAFQPTLLMSHLVSAEVPGDAITARQIAEFARVRMAYPALPASLANSAGIFLGKAARHEIVRPGYALYGGNPTPERENPMRPVVRLEAAILQLREVAAGETAGYNARWTAPGPRLLATLSLGYADGYPRAGSGRAEALVGGVRCPFVGTISMDLVILDVTQAPPEAVRRGAPVVLIGDGLTLDEVGQRAGTIGYEILTNLGSRYDRHYIEGSSLSA.

The active-site Proton acceptor; specific for D-alanine is the Lys39. Lys39 bears the N6-(pyridoxal phosphate)lysine mark. A substrate-binding site is contributed by Arg137. Tyr258 (proton acceptor; specific for L-alanine) is an active-site residue. Met306 serves as a coordination point for substrate.

The protein belongs to the alanine racemase family. Requires pyridoxal 5'-phosphate as cofactor.

The enzyme catalyses L-alanine = D-alanine. It functions in the pathway amino-acid biosynthesis; D-alanine biosynthesis; D-alanine from L-alanine: step 1/1. Functionally, catalyzes the interconversion of L-alanine and D-alanine. May also act on other amino acids. In Methylobacterium nodulans (strain LMG 21967 / CNCM I-2342 / ORS 2060), this protein is Alanine racemase (alr).